A 510-amino-acid polypeptide reads, in one-letter code: Bifunctional pantoate ligase/cytidylate kinase (510 aa).

A pantoate--beta-alanine ligase region spans residues Met-1–Val-276. Met-29–His-36 contacts ATP. His-36 functions as the Proton donor in the catalytic mechanism. Gln-61 serves as a coordination point for (R)-pantoate. Gln-61 contributes to the beta-alanine binding site. Gly-150–Asp-153 lines the ATP pocket. A (R)-pantoate-binding site is contributed by Gln-156. Leu-187–Arg-190 contributes to the ATP binding site. Residues Phe-277–Arg-510 are cytidylate kinase.

This sequence in the N-terminal section; belongs to the pantothenate synthetase family. In the C-terminal section; belongs to the cytidylate kinase family. Type 1 subfamily.

The protein resides in the cytoplasm. It carries out the reaction (R)-pantoate + beta-alanine + ATP = (R)-pantothenate + AMP + diphosphate + H(+). The enzyme catalyses CMP + ATP = CDP + ADP. The catalysed reaction is dCMP + ATP = dCDP + ADP. It functions in the pathway cofactor biosynthesis; (R)-pantothenate biosynthesis; (R)-pantothenate from (R)-pantoate and beta-alanine: step 1/1. Catalyzes the condensation of pantoate with beta-alanine in an ATP-dependent reaction via a pantoyl-adenylate intermediate. Functionally, catalyzes the transfer of a phosphate group from ATP to either CMP or dCMP to form CDP or dCDP and ADP, respectively. This is Bifunctional pantoate ligase/cytidylate kinase from Prochlorococcus marinus (strain MIT 9312).